Reading from the N-terminus, the 947-residue chain is Ionotropic receptor 25a (947 aa).

Positions 1–30 (MILMNPKTSKILWLLGFLSLLSSFSLEIAA) are cleaved as a signal peptide. Over 31-562 (QTTQNINVLF…SLFKFLTVLE (532 aa)) the chain is Extracellular. 4 N-linked (GlcNAc...) asparagine glycosylation sites follow: Asn78, Asn177, Asn277, and Asn434. A helical transmembrane segment spans residues 563 to 583 (TNVWLCILAAYFFTSFLMWIF). Residues 584–641 (DRWSPYSYQNNREKYKDDEEKREFNLKECLWFCMTSLTPQGGGEAPKNLSGRLVAATW) are Cytoplasmic-facing. Residues 642-662 (WLFGFIIIASYTANLAAFLTV) form a helical membrane-spanning segment. At 663–858 (SRLDTPVESL…DQSDGISIQN (196 aa)) the chain is on the extracellular side. Asn687, Asn715, and Asn762 each carry an N-linked (GlcNAc...) asparagine glycan. A helical transmembrane segment spans residues 859 to 879 (IGGVFIVIFVGIGMACITLVF). Topologically, residues 880–947 (EYWWYRYRKN…QYPATFKPRF (68 aa)) are cytoplasmic.

It belongs to the glutamate-gated ion channel (TC 1.A.10.1) family. As to quaternary structure, interacts with nocte. In terms of tissue distribution, in the antenna, detected in neurons of the arista and also detected in sacculus neurons which innervate the first and second chambers (at protein level). Throughout the main body of the antenna, expressed in neurons which innervate the coeloconic class of olfactory sensilla (at protein level). Expressed in multiple cells of the dorsal organ including the dorsal organ cool cells (at protein level). Detected in femur and retina. Expressed in a subset of femur chordonotal neurons and antennal Johnston's Organ neurons.

It is found in the cell membrane. Its subcellular location is the cell projection. It localises to the axon. The protein resides in the dendrite. The protein localises to the perikaryon. It is found in the cilium. Integral part of various neural sensory systems in the antenna that provide the neural basis for the response to environmental changes in temperature (thermosensation), humidity (hygrosensation) and odor detection. Required for odor-evoked electrophysiological responses in multiple neuron classes in the antenna and is likely to function as part of an olfactory receptor complex with Ir76a and Ir76b. Together with Ir21a and Ir93a, mediates the response of the larval dorsal organ cool cells, a trio of cool-responsive neurons, to cooling and is required for cool avoidance behavior. Required in chordonotal organ neurons for behavioral synchronization to low-amplitude temperature cycles and mediates circadian clock resetting by temperature. Together with Ir40a and Ir93a, mediates the response of the hydrosensory sacculus neurons to changes in relative humidity, and is required for dry detection and humidiy preference behavior. This Drosophila melanogaster (Fruit fly) protein is Ionotropic receptor 25a.